The sequence spans 228 residues: Orotidine 5'-phosphate decarboxylase (228 aa).

Substrate-binding positions include aspartate 20, lysine 42, 70–79 (DFKVADIPET), serine 127, 180–190 (PGVGAQGGDPG), glycine 202, and arginine 203. The Proton donor role is filled by lysine 72.

It belongs to the OMP decarboxylase family. Type 1 subfamily. Homodimer.

The enzyme catalyses orotidine 5'-phosphate + H(+) = UMP + CO2. It participates in pyrimidine metabolism; UMP biosynthesis via de novo pathway; UMP from orotate: step 2/2. Catalyzes the decarboxylation of orotidine 5'-monophosphate (OMP) to uridine 5'-monophosphate (UMP). The polypeptide is Orotidine 5'-phosphate decarboxylase (pyrF) (Methanothermobacter thermautotrophicus (strain ATCC 29096 / DSM 1053 / JCM 10044 / NBRC 100330 / Delta H) (Methanobacterium thermoautotrophicum)).